Here is a 301-residue protein sequence, read N- to C-terminus: tRNA dimethylallyltransferase (301 aa).

Residue glycine 12–threonine 19 participates in ATP binding. Threonine 14–threonine 19 serves as a coordination point for substrate. The interval aspartate 37–serine 40 is interaction with substrate tRNA.

It belongs to the IPP transferase family. In terms of assembly, monomer. The cofactor is Mg(2+).

It catalyses the reaction adenosine(37) in tRNA + dimethylallyl diphosphate = N(6)-dimethylallyladenosine(37) in tRNA + diphosphate. In terms of biological role, catalyzes the transfer of a dimethylallyl group onto the adenine at position 37 in tRNAs that read codons beginning with uridine, leading to the formation of N6-(dimethylallyl)adenosine (i(6)A). This chain is tRNA dimethylallyltransferase, found in Sulfurovum sp. (strain NBC37-1).